A 513-amino-acid chain; its full sequence is GMP synthase [glutamine-hydrolyzing] (513 aa).

A Glutamine amidotransferase type-1 domain is found at 8 to 198; sequence KIIVLDYGSQ…ALNICGAKGN (191 aa). The active-site Nucleophile is cysteine 85. Catalysis depends on residues histidine 172 and glutamate 174. The 190-residue stretch at 199–388 folds into the GMPS ATP-PPase domain; it reads WSMENFIDMQ…LGMPDEIVWR (190 aa). 226–232 is an ATP binding site; that stretch reads SGGVDSS.

As to quaternary structure, homodimer.

The enzyme catalyses XMP + L-glutamine + ATP + H2O = GMP + L-glutamate + AMP + diphosphate + 2 H(+). It functions in the pathway purine metabolism; GMP biosynthesis; GMP from XMP (L-Gln route): step 1/1. In terms of biological role, catalyzes the synthesis of GMP from XMP. This chain is GMP synthase [glutamine-hydrolyzing] (guaA), found in Lactococcus lactis subsp. lactis (strain IL1403) (Streptococcus lactis).